Reading from the N-terminus, the 1377-residue chain is Zinc finger MYM-type protein 2 (1377 aa).

Glycyl lysine isopeptide (Lys-Gly) (interchain with G-Cter in SUMO2) cross-links involve residues lysine 48, lysine 88, lysine 98, and lysine 104. Composition is skewed to polar residues over residues 85 to 115 (TSSKNEELQGNDSKITPSSKELASQKGSVSE) and 127 to 138 (TNQGQEKNSSNF). The segment at 85-177 (TSSKNEELQG…GMGNSGITTE (93 aa)) is disordered. Over residues 139 to 152 (IERRPPETKNRTND) the composition is skewed to basic and acidic residues. Lysine 147 participates in a covalent cross-link: Glycyl lysine isopeptide (Lys-Gly) (interchain with G-Cter in SUMO2). Residues 153-164 (VDFSTSSFSRSK) show a composition bias toward polar residues. Residue serine 159 is modified to Phosphoserine. Glycyl lysine isopeptide (Lys-Gly) (interchain with G-Cter in SUMO2) cross-links involve residues lysine 253 and lysine 297. The segment at 273–305 (NGESATHHNPDSWISQSASFPRNQKQPGVDSLS) is disordered. Residues 284–298 (SWISQSASFPRNQKQ) are compositionally biased toward polar residues. Residue serine 305 is modified to Phosphoserine. Residues lysine 312, lysine 325, lysine 348, and lysine 366 each participate in a glycyl lysine isopeptide (Lys-Gly) (interchain with G-Cter in SUMO2) cross-link. An MYM-type 1 zinc finger spans residues 327-363 (VKVTCANCKKPLQKGQTAYQRKGSAHLFCSTTCLSSF). The MYM-type 2 zinc-finger motif lies at 369–409 (PKKLCVMCKKDITTMKGTIVAQVDSSESFQEFCSTSCLSLY). Glycyl lysine isopeptide (Lys-Gly) (interchain with G-Cter in SUMO2) cross-links involve residues lysine 417, lysine 441, lysine 491, lysine 503, lysine 513, lysine 529, and lysine 532. 2 consecutive MYM-type zinc fingers follow at residues 421-456 (NKSRCTICGKLTEIRHEVSFKNMTHKLCSDHCFNRY) and 463-502 (IMNCCEQCGEYLPSKGAGNNVLVIDGQQKRFCCQSCVSEY). The MYM-type 5 zinc finger occupies 533–570 (LTTCTGCRTQCRFFDMTQCIGPNGYMEPYCSTACMNSH). Residues lysine 576, lysine 603, lysine 649, lysine 658, lysine 688, lysine 700, and lysine 709 each participate in a glycyl lysine isopeptide (Lys-Gly) (interchain with G-Cter in SUMO2) cross-link. The MYM-type 6 zinc-finger motif lies at 636-671 (QLKCNYCKNSFCSKPEILEWENKVHQFCSKTCSDDY). 2 MYM-type zinc fingers span residues 723–758 (RCVTCNYCSQLCKKGATKELDGVVRDFCSEDCCKKF) and 764–799 (KAARCDCCKSQGTLKERVQWRGEMKHFCDQHCLLRF). Residues lysine 764, lysine 788, lysine 812, and lysine 829 each participate in a glycyl lysine isopeptide (Lys-Gly) (interchain with G-Cter in SUMO2) cross-link. Phosphoserine is present on residues serine 838 and serine 958. Disordered regions lie at residues 983–1002 (LLKNSDPETQSSMPDVPYEP) and 1028–1064 (VFGEEYEEQPRPRSKKKGAKRKAVSGYQSHDDSSDNS). The segment covering 1039–1050 (PRSKKKGAKRKA) has biased composition (basic residues). A Phosphoserine modification is found at serine 1064. At threonine 1376 the chain carries Phosphothreonine.

As to quaternary structure, can form homodimers. May be a component of a BHC histone deacetylase complex that contains HDAC1, HDAC2, HMG20B/BRAF35, KDM1A, RCOR1/CoREST, PHF21A/BHC80, ZMYM2, ZNF217, ZMYM3, GSE1 and GTF2I. Interacts with FOXP1 and FOXP2.

It is found in the nucleus. Involved in the negative regulation of transcription. In Homo sapiens (Human), this protein is Zinc finger MYM-type protein 2 (ZMYM2).